The following is a 346-amino-acid chain: MANAYKQAGVDIEAGYEAVSRMKKHVQTTMRKEVLGGLGGFGGMFDLSKFALEEPVLVSGTDGVGTKLMLAFMADKHDTIGIDAVAMCVNDIVVQGAEPLFFLDYIACGKAEPSKIENIVKGISEGCRQAGCALIGGETAEMPGMYSTEEYDLAGFTVGIVDKKKIVTGENIEAGHVLIGLASSGIHSNGYSLVRKVLLEDGELSLDRIYGRLELPLGEELLKPTKIYVKPILELLKKYEVYGMAHITGGGFIENIPRMLPEEIGAEIELGSWEIQPIFSLLQEVGKLEEKEMFNIFNMGIGMVVAVKEEDAKDVVRLLEEQGETARIIGRTVQGAGVTFNGGTAL.

It belongs to the AIR synthase family.

The protein localises to the cytoplasm. It carries out the reaction 2-formamido-N(1)-(5-O-phospho-beta-D-ribosyl)acetamidine + ATP = 5-amino-1-(5-phospho-beta-D-ribosyl)imidazole + ADP + phosphate + H(+). Its pathway is purine metabolism; IMP biosynthesis via de novo pathway; 5-amino-1-(5-phospho-D-ribosyl)imidazole from N(2)-formyl-N(1)-(5-phospho-D-ribosyl)glycinamide: step 2/2. This is Phosphoribosylformylglycinamidine cyclo-ligase from Bacillus cereus (strain AH187).